A 144-amino-acid chain; its full sequence is HTH-type transcriptional regulator BilQ (144 aa).

Residues 1-134 (MEQTFAYYTT…LFTLLQKLGK (134 aa)) form the HTH marR-type domain. The segment at residues 48–71 (QRELAAAVRADEGYAARSVEKLLQ) is a DNA-binding region (H-T-H motif).

In terms of biological role, transcription regulator that regulates expression of the bilirubin reductase operon (bilQ, bilR and bilS). The sequence is that of HTH-type transcriptional regulator BilQ from Clostridium symbiosum (strain WAL-14163).